Consider the following 82-residue polypeptide: Putative defensin-like protein 70 (82 aa).

Positions 1 to 27 (MKMESSKMLVVFTLMVLIAVSSDLVSG) are cleaved as a signal peptide. 4 disulfides stabilise this stretch: Cys-39–Cys-80, Cys-43–Cys-66, Cys-52–Cys-78, and Cys-56–Cys-79.

The protein belongs to the DEFL family.

It is found in the secreted. This Arabidopsis thaliana (Mouse-ear cress) protein is Putative defensin-like protein 70 (LCR83).